The primary structure comprises 255 residues: tRNA pseudouridine synthase A (255 aa).

The Nucleophile role is filled by aspartate 43. Tyrosine 94 contributes to the substrate binding site.

This sequence belongs to the tRNA pseudouridine synthase TruA family.

The catalysed reaction is uridine(38/39/40) in tRNA = pseudouridine(38/39/40) in tRNA. In terms of biological role, formation of pseudouridine at positions 38, 39 and 40 in the anticodon stem and loop of transfer RNAs. In Pyrobaculum islandicum (strain DSM 4184 / JCM 9189 / GEO3), this protein is tRNA pseudouridine synthase A.